Reading from the N-terminus, the 58-residue chain is Large ribosomal subunit protein uL30 (58 aa).

It belongs to the universal ribosomal protein uL30 family. In terms of assembly, part of the 50S ribosomal subunit.

This is Large ribosomal subunit protein uL30 from Pseudomonas aeruginosa (strain LESB58).